Consider the following 97-residue polypeptide: Small integral membrane protein 8 (97 aa).

Low complexity predominate over residues 1 to 14 (MSSPSSESSNAKSS). The disordered stretch occupies residues 1–26 (MSSPSSESSNAKSSPPKEEYRTPGLR). Residues 49 to 69 (VMVFGIVTITMCVAYIAYLHA) form a helical membrane-spanning segment.

Belongs to the SMIM8 family.

The protein resides in the membrane. This chain is Small integral membrane protein 8 (smim8), found in Xenopus tropicalis (Western clawed frog).